Consider the following 180-residue polypeptide: Beta-lactoglobulin-1 (180 aa).

The first 18 residues, 1 to 18 (MKCLLLALGLALMCGIQA), serve as a signal peptide directing secretion. 2 disulfides stabilise this stretch: cysteine 84–cysteine 178 and cysteine 124–cysteine 137.

It belongs to the calycin superfamily. Lipocalin family. As to quaternary structure, monomer.

It is found in the secreted. Lactoglobulin is the primary component of whey, it binds retinol and is probably involved in the transport of that molecule. This chain is Beta-lactoglobulin-1 (LGB1), found in Equus caballus (Horse).